Consider the following 462-residue polypeptide: 2-(3-amino-3-carboxypropyl)histidine synthase subunit 1 (462 aa).

The disordered stretch occupies residues 1-87; that stretch reads MEEDRRQTDL…AVATAKPRRA (87 aa). The span at 35–44 shows a compositional bias: polar residues; that stretch reads ESAAQTQNGA. 3 residues coordinate [4Fe-4S] cluster: Cys-173, Cys-276, and Cys-406.

The protein belongs to the DPH1/DPH2 family. DPH1 subfamily. In terms of assembly, component of the 2-(3-amino-3-carboxypropyl)histidine synthase complex composed of DPH1, DPH2, DPH3 and a NADH-dependent reductase, predominantly CBR1. Requires [4Fe-4S] cluster as cofactor.

Its subcellular location is the cytoplasm. The enzyme catalyses L-histidyl-[translation elongation factor 2] + S-adenosyl-L-methionine = 2-[(3S)-amino-3-carboxypropyl]-L-histidyl-[translation elongation factor 2] + S-methyl-5'-thioadenosine + H(+). Its pathway is protein modification; peptidyl-diphthamide biosynthesis. Functionally, catalyzes the first step of diphthamide biosynthesis, a post-translational modification of histidine which occurs in elongation factor 2. DPH1 and DPH2 transfer a 3-amino-3-carboxypropyl (ACP) group from S-adenosyl-L-methionine (SAM) to a histidine residue, the reaction is assisted by a reduction system comprising DPH3 and a NADH-dependent reductase, predominantly CBR1. This is 2-(3-amino-3-carboxypropyl)histidine synthase subunit 1 (DPH1) from Gibberella zeae (strain ATCC MYA-4620 / CBS 123657 / FGSC 9075 / NRRL 31084 / PH-1) (Wheat head blight fungus).